The sequence spans 408 residues: MHLYKPACADIPSPKLGLPKSSESALKCRRHLAVTKPPPQAACWPARPSGAAERKFLEKFLRVHGISLQETTRAETGMAYRNLGKSGLRVSCLGLGTWVTFGGQISDEVAERLMTIAYESGVNLFDTAEVYAAGKAEVILGSIIKKKGWRRSSLVITTKLYWGGKAETERGLSRKHIIEGLKGSLQRLQLEYVDVVFANRPDSNTPMEEIVRAMTHVINQGMAMYWGTSRWSAMEIMEAYSVARQFNMIPPVCEQAEYHLFQREKVEVQLPELYHKIGVGAMTWSPLACGIISGKYGNGVPESSRASLKCYQWLKERIVSEEGRKQQNKLKDLSPIAERLGCTLPQLAVAWCLRNEGVSSVLLGSSTPEQLIENLGAIQVLPKMTSHVVNEIDNILRNKPYSKKDYRS.

Positions 97, 98, 104, and 126 each coordinate NADP(+). Y131 functions as the Proton donor/acceptor in the catalytic mechanism. Residues N199, S229, R230, Q255, W284, S285, P286, L287, A288, C289, K295, R305, G364, S366, Q370, E373, and N374 each coordinate NADP(+).

The protein belongs to the shaker potassium channel beta subunit family. In terms of assembly, homotetramer. Interaction with tetrameric potassium channel alpha subunits gives rise to a heterooctamer. Identified in potassium channel complexes containing KCNA1, KCNA2, KCNA4, KCNA5, KCNA6, KCNAB1 and KCNAB2. Part of a complex containing KCNA1, KCNA4 and LGI1; interaction with LGI1 inhibits down-regulation of KCNA1 channel activity. Interacts with the dimer formed by GNB1 and GNG2; this enhances KCNA1 binding. Interacts with SQSTM1. As to expression, expression most abundant in aorta. Also high in left ventricle. Also detected in right ventricle, atrium, brain, skeletal muscle and kidney. Not detected in liver.

It is found in the cytoplasm. Its subcellular location is the membrane. It localises to the cell membrane. The catalysed reaction is a primary alcohol + NADP(+) = an aldehyde + NADPH + H(+). The enzyme catalyses a secondary alcohol + NADP(+) = a ketone + NADPH + H(+). Functionally, regulatory subunit of the voltage-gated potassium (Kv) Shaker channels composed of pore-forming and potassium-conducting alpha subunits and of regulatory beta subunits. The beta-1/KCNAB1 cytoplasmic subunit mediates closure of delayed rectifier potassium channels by physically obstructing the pore via its N-terminal domain and increases the speed of channel closure for other family members. Promotes the inactivation of Kv1.1/KCNA1, Kv1.2/KCNA2, Kv1.4/KCNA4, Kv1.5/KCNA5 and Kv1.6/KCNA6 alpha subunit-containing channels. Displays nicotinamide adenine dinucleotide phosphate (NADPH)-dependent aldoketoreductase activity by catalyzing the NADPH-dependent reduction of a variety of endogenous aldehydes and ketones. The binding of NADPH is required for efficient down-regulation of potassium channel activity. Oxidation of the bound NADPH restrains N-terminal domain from blocking the channel, thereby decreasing N-type inactivation of potassium channel activity. The sequence is that of Voltage-gated potassium channel subunit beta-1 (KCNAB1) from Mustela putorius (European polecat).